Consider the following 367-residue polypeptide: Phospho-N-acetylmuramoyl-pentapeptide-transferase (367 aa).

The next 10 helical transmembrane spans lie at 27–47, 73–93, 97–117, 132–152, 167–187, 200–220, 237–257, 264–284, 289–309, and 344–364; these read VLAA…VIRW, TMGG…WGDL, YVWT…YDDW, WKFF…AFSA, TMAY…VIVG, GLAI…AYVT, AGEL…FLWF, VFMG…VAVI, IVLL…MLQV, and QVVV…LSTL.

The protein belongs to the glycosyltransferase 4 family. MraY subfamily. Mg(2+) is required as a cofactor.

Its subcellular location is the cell inner membrane. The enzyme catalyses UDP-N-acetyl-alpha-D-muramoyl-L-alanyl-gamma-D-glutamyl-meso-2,6-diaminopimeloyl-D-alanyl-D-alanine + di-trans,octa-cis-undecaprenyl phosphate = di-trans,octa-cis-undecaprenyl diphospho-N-acetyl-alpha-D-muramoyl-L-alanyl-D-glutamyl-meso-2,6-diaminopimeloyl-D-alanyl-D-alanine + UMP. Its pathway is cell wall biogenesis; peptidoglycan biosynthesis. Catalyzes the initial step of the lipid cycle reactions in the biosynthesis of the cell wall peptidoglycan: transfers peptidoglycan precursor phospho-MurNAc-pentapeptide from UDP-MurNAc-pentapeptide onto the lipid carrier undecaprenyl phosphate, yielding undecaprenyl-pyrophosphoryl-MurNAc-pentapeptide, known as lipid I. This Dechloromonas aromatica (strain RCB) protein is Phospho-N-acetylmuramoyl-pentapeptide-transferase.